Consider the following 318-residue polypeptide: Large ribosomal subunit protein uL10 (318 aa).

Tyrosine 24 carries the phosphotyrosine modification. Threonine 59 bears the Phosphothreonine mark. Residue lysine 264 forms a Glycyl lysine isopeptide (Lys-Gly) (interchain with G-Cter in ubiquitin) linkage. A Glycyl lysine isopeptide (Lys-Gly) (interchain with G-Cter in SUMO1); alternate cross-link involves residue lysine 298. Residue lysine 298 forms a Glycyl lysine isopeptide (Lys-Gly) (interchain with G-Cter in SUMO2); alternate linkage. The interval 298–318 (KVEAKEESEESDEDMGFGLFD) is disordered. The span at 303-312 (EESEESDEDM) shows a compositional bias: acidic residues. Phosphoserine occurs at positions 305 and 308.

This sequence belongs to the universal ribosomal protein uL10 family. As to quaternary structure, P0 forms a pentameric complex by interaction with dimers of P1 and P2. Identified in a IGF2BP1-dependent mRNP granule complex containing untranslated mRNAs. Interacts with APEX1. Interacts with FMR1. Post-translationally, ubiquitinated at Lys-264 by RNF14 and RNF25 in response to ribosome collisions (ribosome stalling).

The protein resides in the nucleus. Its subcellular location is the cytoplasm. Its function is as follows. Ribosomal protein P0 is the functional equivalent of E.coli protein L10. The chain is Large ribosomal subunit protein uL10 (RPLP0) from Sus scrofa (Pig).